Here is a 158-residue protein sequence, read N- to C-terminus: UPF0735 ACT domain-containing protein Bsph_3944 (158 aa).

Positions 80 to 155 (TVFLQLQDRK…FVESAEVISS (76 aa)) constitute an ACT domain.

Belongs to the UPF0735 family.

This chain is UPF0735 ACT domain-containing protein Bsph_3944, found in Lysinibacillus sphaericus (strain C3-41).